We begin with the raw amino-acid sequence, 407 residues long: Probable cysteine protease atg4 (407 aa).

Residue Cys136 is the Nucleophile of the active site. Active-site residues include Asp310 and His312.

It belongs to the peptidase C54 family.

The protein localises to the cytoplasm. It localises to the nucleus. Its subcellular location is the preautophagosomal structure. It carries out the reaction [protein]-C-terminal L-amino acid-glycyl-phosphatidylethanolamide + H2O = [protein]-C-terminal L-amino acid-glycine + a 1,2-diacyl-sn-glycero-3-phosphoethanolamine. Functionally, cysteine protease that is required for autophagy. Plays a key role in cytoplasm to vacuole transport (Cvt) and autophagy by mediating both proteolytic activation and delipidation of atg8. The protease activity is required for proteolytic activation of atg8 by the cleavage of the C-terminal amino acid of atg8 to reveal a C-terminal glycine. Azg8 ubiquitin-like activity requires the exposure of the glycine at the C-terminus for its conjugation to phosphatidylethanolamine (PE) and its insertion to membranes, which is necessary for autophagy. The atg8-PE conjugate mediates tethering between adjacent membranes and stimulates membrane hemifusion, leading to expansion of the autophagosomal membrane during autophagy. In addition to the protease activity, also catalyzes deconjugation of PE-conjugated forms of atg8 during macroautophagy since atg8 delipidation is required to release the protein from membranes, which facilitates multiple events during macroautophagy, and especially for efficient autophagosome biogenesis, the assembly of atg99-containing tubulovesicular clusters into phagophores/autophagosomes, and for the disassembly of PAS-associated ATG components. Atg8 delipidation by atg4 also recycles atg8-PE generated on inappropriate membranes to maintain a reservoir of unlipidated atg8 that is required for autophagosome formation at the PAS. This Aspergillus oryzae (strain ATCC 42149 / RIB 40) (Yellow koji mold) protein is Probable cysteine protease atg4.